The sequence spans 384 residues: MKIHEYQAKAILAQYKVPVPRGHVAYTEADAETAAKTLGGSVVVKAQIHAGGRGKGGGVKVAKDAAEALELAKKILGMTLVTHQTGPEGRLVQRLLIEETLPIERELYLGIVLDRVQGKPVFMASSAGGMDIEEVAAKTPELILKETLEYPGLSPYQARKLAFGIGIPAASVNAAAAAMTALSKAYWAMDASLAEINPFILTTDGKVYALDAKITFDDNALYRHKELVELRDLNEEDPLEVEASKHGLNYIKLDGTVGCMVNGAGLAMATMDIIKFAGGSPANFLDVGGGANAEQVKNAFRILLSDHSVKAVLINIFGGILRCDTLATGVVAAARDLNIQVPIVVRMEGTNVEAGRQILLESGFNFTVGADMWDAAQKVVKLAA.

One can recognise an ATP-grasp domain in the interval 9–242 (KAILAQYKVP…LNEEDPLEVE (234 aa)). ATP is bound by residues Lys45, 52–54 (GRG), Glu98, Leu101, and Glu106. Mg(2+) contacts are provided by Asn197 and Asp211. Substrate-binding positions include Asn262 and 319–321 (GIL).

It belongs to the succinate/malate CoA ligase beta subunit family. As to quaternary structure, heterotetramer of two alpha and two beta subunits. Requires Mg(2+) as cofactor.

The enzyme catalyses succinate + ATP + CoA = succinyl-CoA + ADP + phosphate. The catalysed reaction is GTP + succinate + CoA = succinyl-CoA + GDP + phosphate. It functions in the pathway carbohydrate metabolism; tricarboxylic acid cycle; succinate from succinyl-CoA (ligase route): step 1/1. In terms of biological role, succinyl-CoA synthetase functions in the citric acid cycle (TCA), coupling the hydrolysis of succinyl-CoA to the synthesis of either ATP or GTP and thus represents the only step of substrate-level phosphorylation in the TCA. The beta subunit provides nucleotide specificity of the enzyme and binds the substrate succinate, while the binding sites for coenzyme A and phosphate are found in the alpha subunit. In Solibacter usitatus (strain Ellin6076), this protein is Succinate--CoA ligase [ADP-forming] subunit beta.